A 752-amino-acid polypeptide reads, in one-letter code: Probable beta-glucosidase D (752 aa).

Positions 1 to 18 (MRFVSLAVGAALLGAAGA) are cleaved as a signal peptide. N-linked (GlcNAc...) asparagine glycans are attached at residues Asn187 and Asn237. Residue Asp265 is part of the active site. Residues Asn299, Asn343, Asn441, Asn510, Asn532, Asn571, Asn586, Asn638, Asn661, and Asn743 are each glycosylated (N-linked (GlcNAc...) asparagine).

This sequence belongs to the glycosyl hydrolase 3 family.

The protein resides in the secreted. It carries out the reaction Hydrolysis of terminal, non-reducing beta-D-glucosyl residues with release of beta-D-glucose.. Its pathway is glycan metabolism; cellulose degradation. In terms of biological role, beta-glucosidases are one of a number of cellulolytic enzymes involved in the degradation of cellulosic biomass. Catalyzes the last step releasing glucose from the inhibitory cellobiose. In Aspergillus oryzae (strain ATCC 42149 / RIB 40) (Yellow koji mold), this protein is Probable beta-glucosidase D (bglD).